Reading from the N-terminus, the 273-residue chain is Protein GMH1 (273 aa).

The tract at residues 1–33 (MSYLPTYSNDLPAGPQGQRRRNNGNENDARQGY) is disordered. An N-acetylserine modification is found at Ser2. Over 2 to 89 (SYLPTYSNDL…QTKNQWARDD (88 aa)) the chain is Cytoplasmic. Residues 90-110 (PSFFIFQIALISLSSIIWSIY) traverse the membrane as a helical segment. The Lumenal segment spans residues 111–134 (NSGFNNDSDMGALSIIGHFFKSLV). The chain crosses the membrane as a helical span at residues 135–155 (MMVILDFFIFGFIMATIFYLL). The Cytoplasmic portion of the chain corresponds to 156–175 (LNRSHFKFKSSQNSVVEWAY). A helical membrane pass occupies residues 176 to 196 (CFDVHCNSFLIILLCLYFIQF). At 197-216 (LLLPIINLQNWISLLIGNSL) the chain is on the lumenal side. The chain crosses the membrane as a helical span at residues 217–237 (YCFAIGHYFILTFYGYNQLPF). The Cytoplasmic segment spans residues 238 to 242 (LKNLN). Residues 243–263 (FILLPTLGLSIIYLISLFGID) traverse the membrane as a helical segment. At 264–273 (LSKKLSFYNY) the chain is on the lumenal side.

This sequence belongs to the unc-50 family. In terms of assembly, interacts with GEA1 and GEA2.

The protein localises to the golgi apparatus membrane. It localises to the endoplasmic reticulum membrane. The polypeptide is Protein GMH1 (GMH1) (Saccharomyces cerevisiae (strain ATCC 204508 / S288c) (Baker's yeast)).